Reading from the N-terminus, the 301-residue chain is Sulfate adenylyltransferase subunit 2 (301 aa).

This sequence belongs to the PAPS reductase family. CysD subfamily. In terms of assembly, heterodimer composed of CysD, the smaller subunit, and CysN.

It carries out the reaction sulfate + ATP + H(+) = adenosine 5'-phosphosulfate + diphosphate. The protein operates within sulfur metabolism; hydrogen sulfide biosynthesis; sulfite from sulfate: step 1/3. Functionally, with CysN forms the ATP sulfurylase (ATPS) that catalyzes the adenylation of sulfate producing adenosine 5'-phosphosulfate (APS) and diphosphate, the first enzymatic step in sulfur assimilation pathway. APS synthesis involves the formation of a high-energy phosphoric-sulfuric acid anhydride bond driven by GTP hydrolysis by CysN coupled to ATP hydrolysis by CysD. In Trichlorobacter lovleyi (strain ATCC BAA-1151 / DSM 17278 / SZ) (Geobacter lovleyi), this protein is Sulfate adenylyltransferase subunit 2.